The chain runs to 607 residues: Vacuolar fusion protein MON1 homolog (607 aa).

Over residues 1 to 14 the composition is skewed to low complexity; sequence MATSDSRSSPSSSD. Disordered regions lie at residues 1-173 and 463-486; these read MATS…DDAS and PIDR…DISV. Residues 21 to 55 are compositionally biased toward polar residues; the sequence is NPSSDPETNSERVQSQLESMNLSQPSEVSDGSHTE.

This sequence belongs to the MON1/SAND family. Interacts with CCZ1A, CCZ1B and RABF2B. As to expression, widely expressed at stable levels.

Its subcellular location is the endosome. It localises to the prevacuolar compartment. Its function is as follows. Plays an important role in membrane trafficking through the secretory apparatus. In complex with CCZ1, acts as a guanine exchange factor (GEF) for RABG3F of the Rab7 protein family. Promotes the exchange of GDP to GTP, converting RABG3F from an inactive GDP-bound form into an active GTP-bound form. The RABG3F active form is involved in protein trafficking from prevacuolar compartments (PVCs) to vacuoles. May serve as a linker between Rab5 and Rab7 protein families in PVCs and mediate PVC maturation. This Arabidopsis thaliana (Mouse-ear cress) protein is Vacuolar fusion protein MON1 homolog.